Consider the following 258-residue polypeptide: Granzyme K (258 aa).

Positions 1 to 23 (MSFSSSALVFLVAGIYMSSESFH) are cleaved as a signal peptide. A propeptide spans 24 to 25 (TE) (activation peptide). Positions 26 to 253 (IIGGREVQPH…YQTWIKSKLA (228 aa)) constitute a Peptidase S1 domain. Residues Cys-51 and Cys-67 are joined by a disulfide bond. Residues His-66 and Asp-110 each act as charge relay system in the active site. 3 disulfides stabilise this stretch: Cys-143/Cys-214, Cys-175/Cys-193, and Cys-204/Cys-228. Catalysis depends on Ser-208, which acts as the Charge relay system.

Belongs to the peptidase S1 family. Granzyme subfamily. Speen, lungs and liver non-parenchymal cells.

It is found in the cytoplasmic granule. This is Granzyme K (Gzmk) from Rattus norvegicus (Rat).